The sequence spans 559 residues: 3-phosphoinositide-dependent protein kinase 1 (559 aa).

Tyr9 is subject to Phosphotyrosine; by SRC and INSR. A Phosphoserine modification is found at Ser25. The disordered stretch occupies residues 25–83; that stretch reads SPSMVRSQTEPGSSPGIPSGVSRQGSTMDGTTAEARPSTNPLQQHPAQLPPQPRKKRPE. The segment covering 35 to 44 has biased composition (low complexity); it reads PGSSPGIPSG. A compositionally biased stretch (polar residues) spans 45–54; the sequence is VSRQGSTMDG. The Protein kinase domain maps to 85–345; it reads FKFGKILGEG…YGPLKAHPFF (261 aa). Residues 95–97 and Lys114 contribute to the ATP site; that span reads SFS. The interval 116-160 is PIF-pocket; that stretch reads LEKRHIIKENKVPYVTRERDVMSRLDHPFFVKLYFTFQDDEKLYF. Residues 163-165 and Glu169 contribute to the ATP site; that span reads SYA. Asp208 serves as the catalytic Proton acceptor. 2 residues coordinate ATP: Glu212 and Asp226. Ser244 carries the phosphoserine modification. Lys307 bears the N6-acetyllysine mark. Thr357 is modified (phosphothreonine; by MELK). Residues Tyr376 and Tyr379 each carry the phosphotyrosine; by SRC and INSR modification. Ser396 carries the phosphoserine modification. At Ser397 the chain carries Phosphoserine; by MAP3K5. The residue at position 399 (Ser399) is a Phosphoserine. A Phosphoserine; by MAP3K5 modification is found at Ser401. Position 413 is a phosphoserine (Ser413). The region spanning 462–553 is the PH domain; sequence KMGPVDKRKG…EVWRQQYQSN (92 aa). Ser504 is modified (phosphoserine; by PKC/PRKCQ). Thr516 is subject to Phosphothreonine; by autocatalysis. Ser532 is subject to Phosphoserine; by PKC/PRKCQ.

It belongs to the protein kinase superfamily. AGC Ser/Thr protein kinase family. PDPK1 subfamily. Homodimer in its autoinhibited state. Active as monomer. Interacts with NPRL2, PAK1, PTK2B, GRB14, STRAP and IKKB. The Tyr-9 phosphorylated form interacts with SRC, RASA1 and CRK (via their SH2 domains). Interacts with SGK3 in a phosphorylation-dependent manner. The tyrosine-phosphorylated form interacts with PTPN6. The Ser-244 phosphorylated form interacts with YWHAH and YWHAQ. Binds INSR in response to insulin. Interacts (via PH domain) with SMAD3, SMAD4 and SMAD7. Interacts with PKN2; the interaction stimulates PDPK1 autophosphorylation, its PI(3,4,5)P3-dependent kinase activity toward 'Ser-473' of AKT1 but also activates its kinase activity toward PRKCD and PRKCZ. Interacts with PKN1 (via C-terminus) and PPARG. Post-translationally, phosphorylation on Ser-244 in the activation loop is required for full activity. PDPK1 itself can autophosphorylate Ser-244, leading to its own activation. Autophosphorylation is inhibited by the apoptotic C-terminus cleavage product of PKN2. Tyr-9 phosphorylation is critical for stabilization of both PDPK1 and the PDPK1/SRC complex via HSP90-mediated protection of PDPK1 degradation. Angiotensin II stimulates the tyrosine phosphorylation of PDPK1 in vascular smooth muscle in a calcium- and SRC-dependent manner. Phosphorylated on Tyr-9, Tyr-376 and Tyr-379 by INSR in response to insulin. Palmitate negatively regulates autophosphorylation at Ser-244 and palmitate-induced phosphorylation at Ser-532 and Ser-504 by PKC/PRKCQ negatively regulates its ability to phosphorylate PKB/AKT1. Phosphorylation at Thr-357 by MELK partially inhibits kinase activity, the inhibition is cooperatively enhanced by phosphorylation at Ser-397 and Ser-401 by MAP3K5. In terms of processing, monoubiquitinated in the kinase domain, deubiquitinated by USP4. Highly expressed in heart, brain, liver and testis, also expressed in embryonic cells.

It localises to the cytoplasm. The protein resides in the nucleus. It is found in the cell membrane. Its subcellular location is the cell junction. The protein localises to the focal adhesion. The catalysed reaction is L-seryl-[protein] + ATP = O-phospho-L-seryl-[protein] + ADP + H(+). The enzyme catalyses L-threonyl-[protein] + ATP = O-phospho-L-threonyl-[protein] + ADP + H(+). With respect to regulation, homodimerization regulates its activity by maintaining the kinase in an autoinhibitory conformation. NPRL2 down-regulates its activity by interfering with tyrosine phosphorylation at the Tyr-9, Tyr-376 and Tyr-379 residues. The 14-3-3 protein YWHAQ acts as a negative regulator by association with the residues surrounding the Ser-244 residue. STRAP positively regulates its activity by enhancing its autophosphorylation and by stimulating its dissociation from YWHAQ. SMAD2, SMAD3, SMAD4 and SMAD7 also positively regulate its activity by stimulating its dissociation from YWHAQ. Activated by phosphorylation on Tyr-9, Tyr-376 and Tyr-379 by INSR in response to insulin. Its function is as follows. Serine/threonine kinase which acts as a master kinase, phosphorylating and activating a subgroup of the AGC family of protein kinases. Its targets include: protein kinase B (PKB/AKT1, PKB/AKT2, PKB/AKT3), p70 ribosomal protein S6 kinase (RPS6KB1), p90 ribosomal protein S6 kinase (RPS6KA1, RPS6KA2 and RPS6KA3), cyclic AMP-dependent protein kinase (PRKACA), protein kinase C (PRKCD and PRKCZ), serum and glucocorticoid-inducible kinase (SGK1, SGK2 and SGK3), p21-activated kinase-1 (PAK1), TSSK3, protein kinase PKN (PKN1 and PKN2). Plays a central role in the transduction of signals from insulin by providing the activating phosphorylation to PKB/AKT1, thus propagating the signal to downstream targets controlling cell proliferation and survival, as well as glucose and amino acid uptake and storage. Negatively regulates the TGF-beta-induced signaling by: modulating the association of SMAD3 and SMAD7 with TGF-beta receptor, phosphorylating SMAD2, SMAD3, SMAD4 and SMAD7, preventing the nuclear translocation of SMAD3 and SMAD4 and the translocation of SMAD7 from the nucleus to the cytoplasm in response to TGF-beta. Activates PPARG transcriptional activity and promotes adipocyte differentiation. Activates the NF-kappa-B pathway via phosphorylation of IKKB. The tyrosine phosphorylated form is crucial for the regulation of focal adhesions by angiotensin II. Controls proliferation, survival, and growth of developing pancreatic cells. Participates in the regulation of Ca(2+) entry and Ca(2+)-activated K(+) channels of mast cells. Essential for the motility of vascular endothelial cells (ECs) and is involved in the regulation of their chemotaxis. Plays a critical role in cardiac homeostasis by serving as a dual effector for cell survival and beta-adrenergic response. Plays an important role during thymocyte development by regulating the expression of key nutrient receptors on the surface of pre-T cells and mediating Notch-induced cell growth and proliferative responses. Provides negative feedback inhibition to toll-like receptor-mediated NF-kappa-B activation in macrophages. The sequence is that of 3-phosphoinositide-dependent protein kinase 1 (Pdpk1) from Mus musculus (Mouse).